Consider the following 43-residue polypeptide: Delta-actitoxin-Bca1a (43 aa).

Disulfide bonds link C1/C41, C3/C31, and C24/C42.

It is found in the secreted. The protein resides in the nematocyst. Binds specifically to voltage-gated sodium channels (Nav), thereby delaying their inactivation during signal transduction. Thus it strongly stimulates mammalian cardiac muscle contraction. The sequence is that of Delta-actitoxin-Bca1a from Bunodosoma capense (Knobbly sea anemone).